A 258-amino-acid polypeptide reads, in one-letter code: uncharacterized protein (258 aa).

The Cyclin N-terminal domain maps to 16-148 (EAFDSFEYAE…VLRALNFDTH (133 aa)).

The protein belongs to the cyclin family. Cyclin L subfamily.

The protein localises to the cytoplasm. It localises to the nucleus. This is an uncharacterized protein from Schizosaccharomyces pombe (strain 972 / ATCC 24843) (Fission yeast).